Reading from the N-terminus, the 188-residue chain is MTEYKLVVVGAGGVGKSALTIQLIQNHFVDEYDPTIEDSYRKQVVIDGETCLLDILDTAGQEEYSAMRDQYMRTGEGFLCVFAINNTKSFEDIHHYREQIKRVKDSEDVPMVLVGNKCDLPSRSVDTKQAQDLARSYGIPFIETSAKTRQGVDDAFYTLVREIRKHKEKMSKEGKKKKKKSKTKCVLM.

GTP-binding positions include Gly-10–Ala-18, Val-29–Thr-35, Ala-59–Gly-60, and Asn-116–Asp-119. An Effector region motif is present at residues Tyr-32–Tyr-40. Residues Lys-167–Met-188 form a disordered region. Residue Cys-185 is modified to Cysteine methyl ester. The S-farnesyl cysteine moiety is linked to residue Cys-185. The propeptide at Val-186–Met-188 is removed in mature form.

This sequence belongs to the small GTPase superfamily. Ras family.

Its subcellular location is the cell membrane. It localises to the cytoplasm. It carries out the reaction GTP + H2O = GDP + phosphate + H(+). Its activity is regulated as follows. Alternates between an inactive form bound to GDP and an active form bound to GTP. Activated by a guanine nucleotide-exchange factor (GEF) and inactivated by a GTPase-activating protein (GAP). Ras proteins bind GDP/GTP and possess intrinsic GTPase activity. Plays an important role in the regulation of cell proliferation. May play a role in promoting oncogenic events by inducing transcriptional silencing of tumor suppressor genes (TSGs). This chain is GTPase KRas (kras), found in Cyprinus carpio (Common carp).